The chain runs to 400 residues: Argininosuccinate synthase (400 aa).

ATP-binding positions include A10–S18 and A38. Y89 contributes to the L-citrulline binding site. ATP is bound at residue G119. T121, N125, and D126 together coordinate L-aspartate. Position 125 (N125) interacts with L-citrulline. The L-citrulline site is built by R129, S177, S186, E262, and Y274.

It belongs to the argininosuccinate synthase family. Type 1 subfamily. In terms of assembly, homotetramer.

Its subcellular location is the cytoplasm. It carries out the reaction L-citrulline + L-aspartate + ATP = 2-(N(omega)-L-arginino)succinate + AMP + diphosphate + H(+). It functions in the pathway amino-acid biosynthesis; L-arginine biosynthesis; L-arginine from L-ornithine and carbamoyl phosphate: step 2/3. The protein is Argininosuccinate synthase of Prochlorococcus marinus (strain NATL1A).